The chain runs to 221 residues: Protein RER1D (221 aa).

Transmembrane regions (helical) follow at residues 41–58, 64–84, 128–148, and 149–169; these read IVRR…YIYR, GYFV…IGFL, FVVA…FWPI, and LLCY…VHMF. The interval 200-221 is disordered; that stretch reads KGDGGDDRPSSSNSSQGNEKQD. Polar residues predominate over residues 209-221; that stretch reads SSSNSSQGNEKQD.

This sequence belongs to the RER1 family.

It is found in the membrane. Functionally, involved in the retrieval of endoplasmic reticulum membrane proteins from the early Golgi compartment. The polypeptide is Protein RER1D (Arabidopsis thaliana (Mouse-ear cress)).